Here is a 237-residue protein sequence, read N- to C-terminus: Pyridoxine 5'-phosphate synthase (237 aa).

Residues Asn7 and Arg18 each coordinate 3-amino-2-oxopropyl phosphate. His43 (proton acceptor) is an active-site residue. Arg45 and His50 together coordinate 1-deoxy-D-xylulose 5-phosphate. The Proton acceptor role is filled by Glu70. Thr100 provides a ligand contact to 1-deoxy-D-xylulose 5-phosphate. His190 (proton donor) is an active-site residue. 3-amino-2-oxopropyl phosphate contacts are provided by residues Asp191 and 213–214 (GH).

The protein belongs to the PNP synthase family. As to quaternary structure, homooctamer; tetramer of dimers.

It is found in the cytoplasm. It catalyses the reaction 3-amino-2-oxopropyl phosphate + 1-deoxy-D-xylulose 5-phosphate = pyridoxine 5'-phosphate + phosphate + 2 H2O + H(+). The protein operates within cofactor biosynthesis; pyridoxine 5'-phosphate biosynthesis; pyridoxine 5'-phosphate from D-erythrose 4-phosphate: step 5/5. Functionally, catalyzes the complicated ring closure reaction between the two acyclic compounds 1-deoxy-D-xylulose-5-phosphate (DXP) and 3-amino-2-oxopropyl phosphate (1-amino-acetone-3-phosphate or AAP) to form pyridoxine 5'-phosphate (PNP) and inorganic phosphate. This chain is Pyridoxine 5'-phosphate synthase, found in Flavobacterium johnsoniae (strain ATCC 17061 / DSM 2064 / JCM 8514 / BCRC 14874 / CCUG 350202 / NBRC 14942 / NCIMB 11054 / UW101) (Cytophaga johnsonae).